Reading from the N-terminus, the 181-residue chain is Regulator of G-protein signaling 5 (181 aa).

The RGS domain maps to 64-180; that stretch reads SLDKLLQNSY…VRSEFYKELI (117 aa).

Expressed in heart and muscle.

The protein localises to the cytoplasm. The protein resides in the membrane. In terms of biological role, inhibits signal transduction by increasing the GTPase activity of G protein alpha subunits thereby driving them into their inactive GDP-bound form. Binds to G(i)-alpha and G(o)-alpha, but not to G(s)-alpha. The protein is Regulator of G-protein signaling 5 (Rgs5) of Mus musculus (Mouse).